Consider the following 171-residue polypeptide: MLNLAKELVGDEALGLLKYLIGKKSEITDEEIAKELNTKPNEVRKYLYLLSDHGLVTYRKTKDKDSNLYIYYWKVNVNQINEILLSRKRLILEKLRNRYEQEKDGLFYFCPQDNIKYSFDDAIENEFKCLKCGTSLSQYDSEKARSFLEQKIKQIEEEINKEIRRESSKSY.

Residues 1–81 enclose the HTH TFE/IIEalpha-type domain; the sequence is MLNLAKELVG…YWKVNVNQIN (81 aa).

It belongs to the TFE family. As to quaternary structure, monomer. Interaction with RNA polymerase subunits RpoF and RpoE is necessary for Tfe stimulatory transcription activity. Able to interact with Tbp and RNA polymerase in the absence of DNA promoter. Interacts both with the preinitiation and elongation complexes.

In terms of biological role, transcription factor that plays a role in the activation of archaeal genes transcribed by RNA polymerase. Facilitates transcription initiation by enhancing TATA-box recognition by TATA-box-binding protein (Tbp), and transcription factor B (Tfb) and RNA polymerase recruitment. Not absolutely required for transcription in vitro, but particularly important in cases where Tbp or Tfb function is not optimal. It dynamically alters the nucleic acid-binding properties of RNA polymerases by stabilizing the initiation complex and destabilizing elongation complexes. Seems to translocate with the RNA polymerase following initiation and acts by binding to the non template strand of the transcription bubble in elongation complexes. In Sulfolobus acidocaldarius (strain ATCC 33909 / DSM 639 / JCM 8929 / NBRC 15157 / NCIMB 11770), this protein is Transcription factor E.